The sequence spans 89 residues: Putative regulatory protein CYB_0055 (89 aa).

The protein belongs to the RemA family.

The protein is Putative regulatory protein CYB_0055 of Synechococcus sp. (strain JA-2-3B'a(2-13)) (Cyanobacteria bacterium Yellowstone B-Prime).